Reading from the N-terminus, the 85-residue chain is Coiled-coil-helix-coiled-coil-helix domain-containing protein 7 (85 aa).

The CHCH domain occupies 13–55 (INPCLSESDASTRCLDENNYDKERCSTYFLKYKNCRKFWHSIM). 2 short sequence motifs (cx9C motif) span residues 16–26 (CLSESDASTRC) and 37–47 (CSTYFLKYKNC). Disulfide bonds link cysteine 16-cysteine 47 and cysteine 26-cysteine 37.

Belongs to the CHCHD7 family. Monomer.

Its subcellular location is the mitochondrion intermembrane space. The sequence is that of Coiled-coil-helix-coiled-coil-helix domain-containing protein 7 (CHCHD7) from Macaca fascicularis (Crab-eating macaque).